Reading from the N-terminus, the 43-residue chain is Protein PsbN (43 aa).

The helical transmembrane segment at 5–27 threads the bilayer; sequence TLVAISISRLLVSFTGYALYTAF.

Belongs to the PsbN family.

It is found in the plastid. It localises to the chloroplast thylakoid membrane. Its function is as follows. May play a role in photosystem I and II biogenesis. In Cycas taitungensis (Prince sago), this protein is Protein PsbN.